The chain runs to 290 residues: 3-hydroxyacyl-thioester dehydratase Y (290 aa).

The segment at 147-169 is disordered; it reads FGGARGERPAAPEFPDRHPDARI. Positions 151–169 are enriched in basic and acidic residues; it reads RGERPAAPEFPDRHPDARI. The MaoC-like domain maps to 161–271; it reads PDRHPDARID…AVFRTEVAGS (111 aa).

Belongs to the enoyl-CoA hydratase/isomerase family.

The enzyme catalyses a (3R)-3-hydroxyacyl-CoA = a (2E)-enoyl-CoA + H2O. It carries out the reaction (3R)-hydroxyhexanoyl-CoA = (2E)-hexenoyl-CoA + H2O. It catalyses the reaction (2E)-octenoyl-CoA + H2O = (3R)-hydroxyoctanoyl-CoA. The catalysed reaction is (3R)-3-hydroxydecanoyl-CoA = (2E)-decenoyl-CoA + H2O. The enzyme catalyses (3R)-3-hydroxydodecanoyl-CoA = (2E)-dodecenoyl-CoA + H2O. It carries out the reaction (3R)-hydroxyhexadecanoyl-CoA = (2E)-hexadecenoyl-CoA + H2O. Its function is as follows. Shows trans-enoyl-CoA hydratase/3-hydroxyacyl-CoA dehydratase activity. In vitro, can hydrate various enoyl-CoA such as (2E)-hexenoyl-CoA, (2E)-octenoyl-CoA, (2E)-decenoyl-CoA, (2E)-dodecenoyl-CoA and (2E)-hexadecenoyl-CoA. May contribute to the persistence of the tuberculosis infection by inducing COX-2 expression in macrophages through MAPK-NF-kappaB signaling pathway. This is 3-hydroxyacyl-thioester dehydratase Y from Mycobacterium tuberculosis (strain ATCC 25618 / H37Rv).